Here is a 132-residue protein sequence, read N- to C-terminus: DNA-directed RNA polymerase subunit omega (132 aa).

Residues 90–109 (SSEAGGVLGTSSEEEGSSFD) are disordered.

Belongs to the RNA polymerase subunit omega family. The RNAP catalytic core consists of 2 alpha, 1 beta, 1 beta' and 1 omega subunit. When a sigma factor is associated with the core the holoenzyme is formed, which can initiate transcription.

The enzyme catalyses RNA(n) + a ribonucleoside 5'-triphosphate = RNA(n+1) + diphosphate. Its function is as follows. Promotes RNA polymerase assembly. Latches the N- and C-terminal regions of the beta' subunit thereby facilitating its interaction with the beta and alpha subunits. In Bartonella henselae (strain ATCC 49882 / DSM 28221 / CCUG 30454 / Houston 1) (Rochalimaea henselae), this protein is DNA-directed RNA polymerase subunit omega.